The sequence spans 120 residues: Chaperonin GroEL (120 aa).

23–27 (DGTTT) is a binding site for ATP.

It belongs to the chaperonin (HSP60) family. In terms of assembly, forms a cylinder of 14 subunits composed of two heptameric rings stacked back-to-back. Interacts with the co-chaperonin GroES.

It localises to the cytoplasm. It catalyses the reaction ATP + H2O + a folded polypeptide = ADP + phosphate + an unfolded polypeptide.. Its function is as follows. Together with its co-chaperonin GroES, plays an essential role in assisting protein folding. The GroEL-GroES system forms a nano-cage that allows encapsulation of the non-native substrate proteins and provides a physical environment optimized to promote and accelerate protein folding. The polypeptide is Chaperonin GroEL (Mycobacterium shimoidei).